The primary structure comprises 304 residues: Lipoyl synthase (304 aa).

A disordered region spans residues 1–21; that stretch reads MAPELIQIDLEPRKPAPKPSW. Cys48, Cys53, Cys59, Cys74, Cys78, Cys81, and Ser287 together coordinate [4Fe-4S] cluster. Residues 60–276 form the Radical SAM core domain; sequence WNHKTATFML…KEEAMKMGFR (217 aa).

This sequence belongs to the radical SAM superfamily. Lipoyl synthase family. [4Fe-4S] cluster serves as cofactor.

Its subcellular location is the cytoplasm. It catalyses the reaction [[Fe-S] cluster scaffold protein carrying a second [4Fe-4S](2+) cluster] + N(6)-octanoyl-L-lysyl-[protein] + 2 oxidized [2Fe-2S]-[ferredoxin] + 2 S-adenosyl-L-methionine + 4 H(+) = [[Fe-S] cluster scaffold protein] + N(6)-[(R)-dihydrolipoyl]-L-lysyl-[protein] + 4 Fe(3+) + 2 hydrogen sulfide + 2 5'-deoxyadenosine + 2 L-methionine + 2 reduced [2Fe-2S]-[ferredoxin]. It participates in protein modification; protein lipoylation via endogenous pathway; protein N(6)-(lipoyl)lysine from octanoyl-[acyl-carrier-protein]: step 2/2. Its function is as follows. Catalyzes the radical-mediated insertion of two sulfur atoms into the C-6 and C-8 positions of the octanoyl moiety bound to the lipoyl domains of lipoate-dependent enzymes, thereby converting the octanoylated domains into lipoylated derivatives. The polypeptide is Lipoyl synthase (Koribacter versatilis (strain Ellin345)).